The chain runs to 247 residues: 2,3-bisphosphoglycerate-dependent phosphoglycerate mutase (247 aa).

Substrate contacts are provided by residues 8 to 15 (RHGESQWN), 21 to 22 (TG), arginine 60, 87 to 90 (ERHY), lysine 98, 114 to 115 (RR), and 183 to 184 (GN). The Tele-phosphohistidine intermediate role is filled by histidine 9. Residue glutamate 87 is the Proton donor/acceptor of the active site.

Belongs to the phosphoglycerate mutase family. BPG-dependent PGAM subfamily.

It catalyses the reaction (2R)-2-phosphoglycerate = (2R)-3-phosphoglycerate. It functions in the pathway carbohydrate degradation; glycolysis; pyruvate from D-glyceraldehyde 3-phosphate: step 3/5. Its function is as follows. Catalyzes the interconversion of 2-phosphoglycerate and 3-phosphoglycerate. In Chlorobium phaeobacteroides (strain DSM 266 / SMG 266 / 2430), this protein is 2,3-bisphosphoglycerate-dependent phosphoglycerate mutase.